Consider the following 281-residue polypeptide: Cell growth regulator with EF hand domain protein 1 (281 aa).

Residues 1 to 21 (MSRWLMQMLMLPLLLLPLGQA) form the signal peptide. EF-hand domains follow at residues 71–106 (NREQ…ALAP) and 115–150 (PVIL…APKR). 9 residues coordinate Ca(2+): Asp84, Asp86, Asn88, Gln90, Glu95, Asp128, Asp130, Asp132, and Glu139. The tract at residues 146–281 (EAPKRAESLP…HSIQLENDEI (136 aa)) is disordered. A compositionally biased stretch (polar residues) spans 169–184 (LLANSPLQSETQQSLG). Basic and acidic residues predominate over residues 185–213 (TKEEITSQVEAKRALEPEQEAGHHIETKV). Residues Ser217 and Ser228 each carry the phosphoserine modification. Basic and acidic residues predominate over residues 234 to 256 (GPREDAERQVESKDNEGEAKDLP).

Probably digested extracellularly by an unknown serine protease generating extremely hydrophobic bioactive peptides. As to expression, expressed predominantly in whole brain and kidney, with limited expression in heart, lung, liver, and skeletal muscle and no expression in spleen and testis. Also expressed in pituitary gland, adrenal gland, digestive tract, and reproductive organs.

The protein localises to the secreted. In terms of biological role, mediates cell-cell adhesion in a calcium-dependent manner. Able to inhibit growth in several cell lines. This Rattus norvegicus (Rat) protein is Cell growth regulator with EF hand domain protein 1.